We begin with the raw amino-acid sequence, 305 residues long: Aspartate carbamoyltransferase catalytic subunit (305 aa).

Carbamoyl phosphate is bound by residues Arg-51 and Thr-52. Lys-79 is a binding site for L-aspartate. Positions 101, 130, and 133 each coordinate carbamoyl phosphate. Residues Arg-163 and Arg-215 each contribute to the L-aspartate site. 2 residues coordinate carbamoyl phosphate: Gly-256 and Pro-257.

The protein belongs to the aspartate/ornithine carbamoyltransferase superfamily. ATCase family. In terms of assembly, heterododecamer (2C3:3R2) of six catalytic PyrB chains organized as two trimers (C3), and six regulatory PyrI chains organized as three dimers (R2).

The catalysed reaction is carbamoyl phosphate + L-aspartate = N-carbamoyl-L-aspartate + phosphate + H(+). The protein operates within pyrimidine metabolism; UMP biosynthesis via de novo pathway; (S)-dihydroorotate from bicarbonate: step 2/3. Functionally, catalyzes the condensation of carbamoyl phosphate and aspartate to form carbamoyl aspartate and inorganic phosphate, the committed step in the de novo pyrimidine nucleotide biosynthesis pathway. This is Aspartate carbamoyltransferase catalytic subunit from Ehrlichia canis (strain Jake).